Consider the following 142-residue polypeptide: Protein NIM1-INTERACTING 1 (142 aa).

An involved in NPR1/NIM1 interaction region spans residues 47–53 (DTFFKLI). A Nuclear localization signal motif is present at residues 60-64 (RKRRR). Disordered stretches follow at residues 63 to 86 (RREE…RSGI) and 108 to 142 (MFVS…NLAL). A coiled-coil region spans residues 110–141 (VSDHKEENTKVEQEEDQTEERNEDKALDLNLA). Residues 111–121 (SDHKEENTKVE) are compositionally biased toward basic and acidic residues.

It belongs to the NPR1-interactor family. In terms of assembly, interacts with NPR1 C-terminal region.

It localises to the nucleus. This chain is Protein NIM1-INTERACTING 1, found in Arabidopsis thaliana (Mouse-ear cress).